Here is a 298-residue protein sequence, read N- to C-terminus: Formamidopyrimidine-DNA glycosylase (298 aa).

The Schiff-base intermediate with DNA role is filled by proline 2. Catalysis depends on glutamate 3, which acts as the Proton donor. The active-site Proton donor; for beta-elimination activity is the lysine 58. DNA-binding residues include histidine 106, arginine 128, and lysine 171. The segment at 262-298 adopts an FPG-type zinc-finger fold; that stretch reads SVYDQEGQPCRTPGCGGTVERVVQAGRSTFYCAACQK. Arginine 288 (proton donor; for delta-elimination activity) is an active-site residue.

It belongs to the FPG family. As to quaternary structure, monomer. It depends on Zn(2+) as a cofactor.

The catalysed reaction is Hydrolysis of DNA containing ring-opened 7-methylguanine residues, releasing 2,6-diamino-4-hydroxy-5-(N-methyl)formamidopyrimidine.. The enzyme catalyses 2'-deoxyribonucleotide-(2'-deoxyribose 5'-phosphate)-2'-deoxyribonucleotide-DNA = a 3'-end 2'-deoxyribonucleotide-(2,3-dehydro-2,3-deoxyribose 5'-phosphate)-DNA + a 5'-end 5'-phospho-2'-deoxyribonucleoside-DNA + H(+). In terms of biological role, involved in base excision repair of DNA damaged by oxidation or by mutagenic agents. Acts as a DNA glycosylase that recognizes and removes damaged bases. Has a preference for oxidized purines, such as 7,8-dihydro-8-oxoguanine (8-oxoG). Has AP (apurinic/apyrimidinic) lyase activity and introduces nicks in the DNA strand. Cleaves the DNA backbone by beta-delta elimination to generate a single-strand break at the site of the removed base with both 3'- and 5'-phosphates. This is Formamidopyrimidine-DNA glycosylase (mutM) from Agrobacterium fabrum (strain C58 / ATCC 33970) (Agrobacterium tumefaciens (strain C58)).